The sequence spans 657 residues: Translation factor GUF1, mitochondrial (657 aa).

A mitochondrion-targeting transit peptide spans 1-39 (MRGCLQSVKWLTSALRPSQSLASSTRYPRRLLSTSAPRN). The tr-type G domain occupies 59–239 (ERFRNFCIVA…TVIEQIPAPV (181 aa)). GTP contacts are provided by residues 121–128 (HQGEDYLL), 185–189 (INKVD), and 239–242 (VGDR).

Belongs to the TRAFAC class translation factor GTPase superfamily. Classic translation factor GTPase family. LepA subfamily.

It is found in the mitochondrion inner membrane. It catalyses the reaction GTP + H2O = GDP + phosphate + H(+). Its function is as follows. Promotes mitochondrial protein synthesis. May act as a fidelity factor of the translation reaction, by catalyzing a one-codon backward translocation of tRNAs on improperly translocated ribosomes. Binds to mitochondrial ribosomes in a GTP-dependent manner. The polypeptide is Translation factor GUF1, mitochondrial (Ajellomyces capsulatus (strain H143) (Darling's disease fungus)).